A 329-amino-acid chain; its full sequence is BTB/POZ domain-containing adapter for CUL3-mediated RhoA degradation protein 1 (329 aa).

Positions 1 to 15 (MSAEASGPAAAEAPS) are enriched in low complexity. The segment at 1-21 (MSAEASGPAAAEAPSLEVAKP) is disordered. The BTB domain maps to 41 to 109 (KYVKLNVGGS…LRDGSVPLPE (69 aa)). Residues 280 to 302 (LEATGGAAGGGGASRGEDEDNRE) are disordered.

Belongs to the BACURD family. In terms of assembly, homotetramer; forms a two-fold symmetric tetramer in solution. Interacts with CUL3; interaction is direct and forms a 5:5 heterodecamer. Component of the BCR(KCTD13) E3 ubiquitin ligase complex, at least composed of CUL3, KCTD13/BACURD1 and RBX1. Interacts with RHOA; with a preference for RhoA-GDP. Interacts with POLD2 and PCNA. Interacts with SPRTN.

It localises to the nucleus. Its pathway is protein modification; protein ubiquitination. Functionally, substrate-specific adapter of a BCR (BTB-CUL3-RBX1) E3 ubiquitin-protein ligase complex required for synaptic transmission. The BCR(KCTD13) E3 ubiquitin ligase complex mediates the ubiquitination of RHOA, leading to its degradation by the proteasome, thereby regulating the actin cytoskeleton and promoting synaptic transmission. The polypeptide is BTB/POZ domain-containing adapter for CUL3-mediated RhoA degradation protein 1 (KCTD13) (Bos taurus (Bovine)).